The primary structure comprises 552 residues: Dihydroxy-acid dehydratase (552 aa).

D78 is a binding site for Mg(2+). Residue C119 participates in [2Fe-2S] cluster binding. Mg(2+) is bound by residues D120 and K121. K121 is modified (N6-carboxylysine). C191 is a [2Fe-2S] cluster binding site. E442 serves as a coordination point for Mg(2+). S468 functions as the Proton acceptor in the catalytic mechanism.

It belongs to the IlvD/Edd family. Homodimer. It depends on [2Fe-2S] cluster as a cofactor. Mg(2+) serves as cofactor.

The enzyme catalyses (2R)-2,3-dihydroxy-3-methylbutanoate = 3-methyl-2-oxobutanoate + H2O. It carries out the reaction (2R,3R)-2,3-dihydroxy-3-methylpentanoate = (S)-3-methyl-2-oxopentanoate + H2O. The protein operates within amino-acid biosynthesis; L-isoleucine biosynthesis; L-isoleucine from 2-oxobutanoate: step 3/4. Its pathway is amino-acid biosynthesis; L-valine biosynthesis; L-valine from pyruvate: step 3/4. In terms of biological role, functions in the biosynthesis of branched-chain amino acids. Catalyzes the dehydration of (2R,3R)-2,3-dihydroxy-3-methylpentanoate (2,3-dihydroxy-3-methylvalerate) into 2-oxo-3-methylpentanoate (2-oxo-3-methylvalerate) and of (2R)-2,3-dihydroxy-3-methylbutanoate (2,3-dihydroxyisovalerate) into 2-oxo-3-methylbutanoate (2-oxoisovalerate), the penultimate precursor to L-isoleucine and L-valine, respectively. The polypeptide is Dihydroxy-acid dehydratase (Moorella thermoacetica (strain ATCC 39073 / JCM 9320)).